The sequence spans 1256 residues: Centrosome and spindle pole-associated protein 1 (1256 aa).

2 coiled-coil regions span residues 38–62 (ADNLDEFIEEQKARLAEDKAELESD) and 114–135 (EDYERKKHKLKEELRQDYRRYL). Residues 189 to 208 (GKEESSEKFRQVEKSTEPKS) are compositionally biased toward basic and acidic residues. Disordered regions lie at residues 189 to 244 (GKEE…LTPS) and 381 to 403 (AENKSAPDNETSKSANQDTCSPF). The segment covering 222-232 (LTSQIQTSCEN) has biased composition (polar residues). The residue at position 244 (Ser244) is a Phosphoserine. Residues 244–270 (SEAYEELLNQRRLEEDRYRQLDDEIEL) adopt a coiled-coil conformation. The stretch at 417–449 (QRRKEKYRLELLEQMAEQQRNKRREKDLELRVA) forms a coiled coil. Residues Ser459 and Ser527 each carry the phosphoserine modification. Residues 625–669 (SKQSLQSYQEALQQQIREREERRKKEREEKEEYEAKLEAEMRTYN) adopt a coiled-coil conformation. 2 disordered regions span residues 735–757 (ANKSSGHMQTQSSPFARGNVFGE) and 813–853 (EYEE…KKEE). The segment covering 736-748 (NKSSGHMQTQSSP) has biased composition (polar residues). Residues Ser901 and Ser920 each carry the phosphoserine modification. The interval 913–932 (SSMSRAQSPPVPARKNQLRA) is disordered. A coiled-coil region spans residues 925–964 (ARKNQLRAEEEKKNVIMELSEMRKQLRSEERRLQERLLHM). At Ser966 the chain carries Phosphoserine. Disordered stretches follow at residues 1114 to 1147 (EDDVLPPPSQLPSARERRRNKWKGLDIDSSRPNV) and 1232 to 1256 (LNQEQQQIPGKPGTFTWQGLSTAHG). Residues 1246–1256 (FTWQGLSTAHG) show a composition bias toward polar residues.

In terms of assembly, interacts with PLEKHG6. Interacts with ARMC9, TOGARAM1, CCDC66, CEP104 and CEP290. Post-translationally, phosphorylated. Phosphorylation increases in colcemide-treated cells. As to expression, expressed in adult and fetal brain with enrichment in the cerebellum. Detected in testis.

Its subcellular location is the cytoplasm. The protein resides in the cytoskeleton. The protein localises to the microtubule organizing center. It is found in the centrosome. It localises to the spindle. Its subcellular location is the spindle pole. The protein resides in the cell projection. The protein localises to the cilium. Its function is as follows. May play a role in cell-cycle-dependent microtubule organization. The polypeptide is Centrosome and spindle pole-associated protein 1 (CSPP1) (Homo sapiens (Human)).